The sequence spans 295 residues: Bifunctional protein FolD (295 aa).

NADP(+) contacts are provided by residues Gly-166–Ser-168, Ser-195, and Ile-236.

It belongs to the tetrahydrofolate dehydrogenase/cyclohydrolase family. Homodimer.

It carries out the reaction (6R)-5,10-methylene-5,6,7,8-tetrahydrofolate + NADP(+) = (6R)-5,10-methenyltetrahydrofolate + NADPH. The enzyme catalyses (6R)-5,10-methenyltetrahydrofolate + H2O = (6R)-10-formyltetrahydrofolate + H(+). The protein operates within one-carbon metabolism; tetrahydrofolate interconversion. Its function is as follows. Catalyzes the oxidation of 5,10-methylenetetrahydrofolate to 5,10-methenyltetrahydrofolate and then the hydrolysis of 5,10-methenyltetrahydrofolate to 10-formyltetrahydrofolate. The sequence is that of Bifunctional protein FolD from Chlorobium phaeobacteroides (strain DSM 266 / SMG 266 / 2430).